Here is a 388-residue protein sequence, read N- to C-terminus: Succinate--CoA ligase [ADP-forming] subunit beta (388 aa).

Positions 9 to 244 constitute an ATP-grasp domain; it reads KEILRKFGVA…LDEEDPAEIE (236 aa). Residues lysine 46, 53–55, glutamate 99, alanine 102, and glutamate 107 each bind ATP; that span reads GRG. Mg(2+) contacts are provided by asparagine 199 and aspartate 213. Residues asparagine 264 and 321 to 323 each bind substrate; that span reads GIM.

This sequence belongs to the succinate/malate CoA ligase beta subunit family. Heterotetramer of two alpha and two beta subunits. The cofactor is Mg(2+).

It carries out the reaction succinate + ATP + CoA = succinyl-CoA + ADP + phosphate. The catalysed reaction is GTP + succinate + CoA = succinyl-CoA + GDP + phosphate. Its pathway is carbohydrate metabolism; tricarboxylic acid cycle; succinate from succinyl-CoA (ligase route): step 1/1. Functionally, succinyl-CoA synthetase functions in the citric acid cycle (TCA), coupling the hydrolysis of succinyl-CoA to the synthesis of either ATP or GTP and thus represents the only step of substrate-level phosphorylation in the TCA. The beta subunit provides nucleotide specificity of the enzyme and binds the substrate succinate, while the binding sites for coenzyme A and phosphate are found in the alpha subunit. This is Succinate--CoA ligase [ADP-forming] subunit beta from Burkholderia thailandensis (strain ATCC 700388 / DSM 13276 / CCUG 48851 / CIP 106301 / E264).